Reading from the N-terminus, the 303-residue chain is Probable endonuclease 4 (303 aa).

Zn(2+) contacts are provided by H78, H118, E154, D188, H191, H222, D235, H237, and E267.

Belongs to the AP endonuclease 2 family. Zn(2+) is required as a cofactor.

It catalyses the reaction Endonucleolytic cleavage to 5'-phosphooligonucleotide end-products.. Its function is as follows. Endonuclease IV plays a role in DNA repair. It cleaves phosphodiester bonds at apurinic or apyrimidinic (AP) sites, generating a 3'-hydroxyl group and a 5'-terminal sugar phosphate. The sequence is that of Probable endonuclease 4 from Mycoplasmoides gallisepticum (strain R(low / passage 15 / clone 2)) (Mycoplasma gallisepticum).